We begin with the raw amino-acid sequence, 283 residues long: Protease HtpX (283 aa).

2 consecutive transmembrane segments (helical) span residues 4 to 24 and 33 to 53; these read ILLFLATNMAVMLVLGIILSV and GGILIMALLFGFAGSLISLFL. His-139 contributes to the Zn(2+) binding site. Glu-140 is a catalytic residue. His-143 serves as a coordination point for Zn(2+). Helical transmembrane passes span 147 to 167 and 190 to 210; these read GDMVTMALLQGVLNTFVIFLS and IYFLVSMVLEMLFGVLASIIA. Residue Glu-218 participates in Zn(2+) binding.

Belongs to the peptidase M48B family. Zn(2+) is required as a cofactor.

The protein localises to the cell inner membrane. The chain is Protease HtpX from Haemophilus influenzae (strain PittGG).